The chain runs to 396 residues: Tryptophan synthase beta chain 1 (396 aa).

The residue at position 86 (K86) is an N6-(pyridoxal phosphate)lysine.

This sequence belongs to the TrpB family. Tetramer of two alpha and two beta chains. Requires pyridoxal 5'-phosphate as cofactor.

It catalyses the reaction (1S,2R)-1-C-(indol-3-yl)glycerol 3-phosphate + L-serine = D-glyceraldehyde 3-phosphate + L-tryptophan + H2O. The protein operates within amino-acid biosynthesis; L-tryptophan biosynthesis; L-tryptophan from chorismate: step 5/5. Functionally, the beta subunit is responsible for the synthesis of L-tryptophan from indole and L-serine. This Vibrio parahaemolyticus serotype O3:K6 (strain RIMD 2210633) protein is Tryptophan synthase beta chain 1 (trpB1).